We begin with the raw amino-acid sequence, 172 residues long: Ribosome maturation factor RimM (172 aa).

A PRC barrel domain is found at 96 to 168 (DGEFYYHEII…RVQVELMEGL (73 aa)).

The protein belongs to the RimM family. Binds ribosomal protein uS19.

It is found in the cytoplasm. In terms of biological role, an accessory protein needed during the final step in the assembly of 30S ribosomal subunit, possibly for assembly of the head region. Essential for efficient processing of 16S rRNA. May be needed both before and after RbfA during the maturation of 16S rRNA. It has affinity for free ribosomal 30S subunits but not for 70S ribosomes. This chain is Ribosome maturation factor RimM, found in Streptococcus agalactiae serotype III (strain NEM316).